The primary structure comprises 576 residues: Formate--tetrahydrofolate ligase 2 (576 aa).

69-76 (TPLGEGKT) contacts ATP.

It belongs to the formate--tetrahydrofolate ligase family.

It catalyses the reaction (6S)-5,6,7,8-tetrahydrofolate + formate + ATP = (6R)-10-formyltetrahydrofolate + ADP + phosphate. The protein operates within one-carbon metabolism; tetrahydrofolate interconversion. This chain is Formate--tetrahydrofolate ligase 2, found in Rubrobacter xylanophilus (strain DSM 9941 / JCM 11954 / NBRC 16129 / PRD-1).